The sequence spans 568 residues: Probable pectinesterase/pectinesterase inhibitor 23 (568 aa).

An N-terminal signal peptide occupies residues 1–33 (MGSDGDKKKKFIVAGSVSGFLVIMVVSVAVVTS). The segment at 45 to 198 (RKTTKAVQAV…RELSSNSLAM (154 aa)) is pectinesterase inhibitor 23. Residues N94, N210, and N316 are each glycosylated (N-linked (GlcNAc...) asparagine). The segment at 251–548 (PGPVKANAVV…PQDALLYTGD (298 aa)) is pectinesterase 23. Residues T333 and Q363 each contribute to the substrate site. D386 functions as the Proton donor; for pectinesterase activity in the catalytic mechanism. A disulfide bridge connects residues C400 and C420. The active-site Nucleophile; for pectinesterase activity is D407. Substrate-binding residues include R475 and W477.

It in the N-terminal section; belongs to the PMEI family. This sequence in the C-terminal section; belongs to the pectinesterase family. In terms of tissue distribution, expressed in mature pollen grains in the anthers and on the stigma. Found in pollen tubes within the style.

The protein resides in the secreted. It localises to the cell wall. The enzyme catalyses [(1-&gt;4)-alpha-D-galacturonosyl methyl ester](n) + n H2O = [(1-&gt;4)-alpha-D-galacturonosyl](n) + n methanol + n H(+). It functions in the pathway glycan metabolism; pectin degradation; 2-dehydro-3-deoxy-D-gluconate from pectin: step 1/5. Functionally, acts in the modification of cell walls via demethylesterification of cell wall pectin. The chain is Probable pectinesterase/pectinesterase inhibitor 23 (PME23) from Arabidopsis thaliana (Mouse-ear cress).